The following is a 148-amino-acid chain: Protein F15 (148 aa).

It belongs to the poxviridae F15 protein family.

The chain is Protein F15 from Fowlpox virus (strain NVSL) (FPV).